Here is a 762-residue protein sequence, read N- to C-terminus: 5-methyltetrahydropteroyltriglutamate--homocysteine methyltransferase (762 aa).

Residues 17 to 20 and Lys111 contribute to the 5-methyltetrahydropteroyltri-L-glutamate site; that span reads REWK. L-homocysteine-binding positions include 435 to 437 and Glu488; that span reads IGS. Residues 435–437 and Glu488 each bind L-methionine; that span reads IGS. 5-methyltetrahydropteroyltri-L-glutamate is bound by residues 519–520 and Trp565; that span reads RC. Asp603 serves as a coordination point for L-homocysteine. Asp603 lines the L-methionine pocket. Glu609 contacts 5-methyltetrahydropteroyltri-L-glutamate. His645, Cys647, and Glu669 together coordinate Zn(2+). His698 acts as the Proton donor in catalysis. Residue Cys730 participates in Zn(2+) binding.

This sequence belongs to the vitamin-B12 independent methionine synthase family. It depends on Zn(2+) as a cofactor.

The catalysed reaction is 5-methyltetrahydropteroyltri-L-glutamate + L-homocysteine = tetrahydropteroyltri-L-glutamate + L-methionine. It participates in amino-acid biosynthesis; L-methionine biosynthesis via de novo pathway; L-methionine from L-homocysteine (MetE route): step 1/1. Its function is as follows. Catalyzes the transfer of a methyl group from 5-methyltetrahydrofolate to homocysteine resulting in methionine formation. The chain is 5-methyltetrahydropteroyltriglutamate--homocysteine methyltransferase from Bacillus cereus (strain ATCC 10987 / NRS 248).